The primary structure comprises 358 residues: MVDAQLTDLYGTVVAVQANFYQVRLDSAVMGENLLCTRRARLQKIGQSVMVGDRVRVEEANFGDQQGAIAEVLPRSTEIDRPAVANIEQILLVFALAEPVLDPWLISRFLVKAESTGLEIAVCVNKIDLGEPEQIEVWGDRLAGWGYRPFFVSVEKNRGFEALLAQLNHKITLLAGPSGVGKSSLINCLIPEINQRVGDVSGKLQKGRHTTRHVQLFALPNRGLLADSPGFNQPDINCLPEELTFYFPEVRARLALGNCQFNDCTHRREPNCVVRGDWERYQHYLEFLEEAIAREQSLQKTSTKESSLKLKIKEAGQETYEPKLANKKYRRPSRRGKNQDQERYENKTLQDIYNDDSE.

The region spanning 76 to 234 is the CP-type G domain; the sequence is STEIDRPAVA…LADSPGFNQP (159 aa). Residues 125-128 and 176-184 contribute to the GTP site; these read NKID and GPSGVGKSS. Cys259, Cys264, His266, and Cys272 together coordinate Zn(2+). Residues 319-358 are disordered; it reads TYEPKLANKKYRRPSRRGKNQDQERYENKTLQDIYNDDSE. Basic residues predominate over residues 325-336; it reads ANKKYRRPSRRG. Over residues 337-348 the composition is skewed to basic and acidic residues; it reads KNQDQERYENKT.

This sequence belongs to the TRAFAC class YlqF/YawG GTPase family. RsgA subfamily. As to quaternary structure, monomer. Associates with 30S ribosomal subunit, binds 16S rRNA. Zn(2+) is required as a cofactor.

The protein resides in the cytoplasm. One of several proteins that assist in the late maturation steps of the functional core of the 30S ribosomal subunit. Helps release RbfA from mature subunits. May play a role in the assembly of ribosomal proteins into the subunit. Circularly permuted GTPase that catalyzes slow GTP hydrolysis, GTPase activity is stimulated by the 30S ribosomal subunit. The polypeptide is Small ribosomal subunit biogenesis GTPase RsgA (Microcystis aeruginosa (strain NIES-843 / IAM M-2473)).